Here is a 301-residue protein sequence, read N- to C-terminus: uncharacterized protein (301 aa).

It belongs to the asfivirus E301R family. In terms of assembly, interacts with host IRF3.

Plays a role in the inhibition of host innate immune system by acting as a negatively regulator of type I interferon production. Mechanistically, interacts with and prevents host IRF3 nuclear localization to inhibit its transcriptional activity. This is an uncharacterized protein from African swine fever virus (isolate Tick/South Africa/Pretoriuskop Pr4/1996) (ASFV).